Here is a 199-residue protein sequence, read N- to C-terminus: 7-methyl-GTP pyrophosphatase (199 aa).

The Proton acceptor role is filled by Asp76.

The protein belongs to the Maf family. YceF subfamily. It depends on a divalent metal cation as a cofactor.

It is found in the cytoplasm. It catalyses the reaction N(7)-methyl-GTP + H2O = N(7)-methyl-GMP + diphosphate + H(+). Functionally, nucleoside triphosphate pyrophosphatase that hydrolyzes 7-methyl-GTP (m(7)GTP). May have a dual role in cell division arrest and in preventing the incorporation of modified nucleotides into cellular nucleic acids. The sequence is that of 7-methyl-GTP pyrophosphatase from Rhizobium etli (strain ATCC 51251 / DSM 11541 / JCM 21823 / NBRC 15573 / CFN 42).